A 411-amino-acid polypeptide reads, in one-letter code: MRFIEEFINKGYFHQCTDLDRLTAITKETKIAAYIGFDCTATSLHIGSLMQIMILRLLQQHGHKPIVIIGGGTSKIGDPTWKDEVRKILSKEDIAKNAEGIKKSLSKFIKFGDGKSDAIMLDNAEWLDSFNYLDFLRDFGSYFSVNRMLTMDSVKLRLEREQHLSFLEFNYMLLQAYDFYYLSKHYNCSLQLGGSDQWGNIVMGADLIRKISGKEVFGMTTPLLTTSSGAKMGKTAAGAVWLNEDLLSPYDYYQYWRNCEDADIVRFAKLYSEFTQEELNRFEILAAEDINAAKKQLAYELTKLCHSEQAAKSALETAVKIFEEGQIDENLPTVVLEQEVLQAGISAYELFHEAGLATSKSEARKLIRGNGAKINDRLVEDENMIINTNFLLDKNVIKLSAGKKRHILVRV.

Residue Tyr-34 coordinates L-tyrosine. A 'HIGH' region motif is present at residues 39–48 (CTATSLHIGS). Positions 171 and 175 each coordinate L-tyrosine. The 'KMSKS' region signature appears at 231–235 (KMGKT). Lys-234 contributes to the ATP binding site. In terms of domain architecture, S4 RNA-binding spans 345–411 (ISAYELFHEA…GKKRHILVRV (67 aa)).

This sequence belongs to the class-I aminoacyl-tRNA synthetase family. TyrS type 1 subfamily. As to quaternary structure, homodimer.

The protein resides in the cytoplasm. It catalyses the reaction tRNA(Tyr) + L-tyrosine + ATP = L-tyrosyl-tRNA(Tyr) + AMP + diphosphate + H(+). Functionally, catalyzes the attachment of tyrosine to tRNA(Tyr) in a two-step reaction: tyrosine is first activated by ATP to form Tyr-AMP and then transferred to the acceptor end of tRNA(Tyr). This Rickettsia massiliae (strain Mtu5) protein is Tyrosine--tRNA ligase.